Reading from the N-terminus, the 7968-residue chain is Obscurin (7968 aa).

Ig-like domains lie at 10 to 100 (PRFL…LQVD), 110 to 202 (PHFL…LVVD), 236 to 322 (PASP…QTYS), 331 to 414 (PAVP…RTVA), and 420 to 508 (GNLL…VSAP). C31 and C82 are oxidised to a cystine. The tract at residues 228 to 249 (EAMRAEGAPASPPSTGTRTCTV) is disordered. The segment covering 240–249 (PSTGTRTCTV) has biased composition (polar residues). Cystine bridges form between C259–C311 and C354–C404. At S395 the chain carries Phosphoserine. The Fibronectin type-III 1 domain maps to 515–612 (PPVDPVVKAR…FPGTVHLAPK (98 aa)). Ig-like domains are found at residues 619 to 698 (LKAV…MEVR), 701 to 790 (PGLT…YQLS), 798 to 884 (LHKD…LRVS), 886 to 977 (PKVV…DVKE), 978 to 1066 (PKVV…FRLH), 1070 to 1161 (PKMM…HITE), 1162 to 1252 (PKGV…LHIT), 1254 to 1345 (PKAV…DVSE), 1346 to 1432 (PKAV…LSFS), 1438 to 1524 (PKVV…LSFH), 1530 to 1621 (PKAV…HVAE), and 1622 to 1719 (PKVV…PQIS). 12 cysteine pairs are disulfide-bonded: C819-C870, C912-C962, C1004-C1054, C1096-C1146, C1188-C1238, C1280-C1330, C1372-C1422, C1464-C1514, C1556-C1606, C1648-C1698, C1723-C1791, and C1830-C1880. The 78-residue stretch at 1731-1808 (KEHEDIILTA…DFPVQVEEVA (78 aa)) folds into the Fibronectin type-III 2 domain. Ig-like domains follow at residues 1809–1894 (AKFC…LTVS), 1896–1982 (PRVV…AALR), 1987–2071 (PVLF…AKLT), 2077–2162 (VRLV…LVVT), 2165–2249 (PVSF…ASVK), 2289–2380 (PVTL…QSIT), 2468–2559 (PVVL…REVT), 2564–2643 (LQDA…LEVR), 2646–2730 (PVVF…ARVR), 2736–2823 (VGIT…LIVR), 2826–2908 (PAAI…STAS), 2920–2999 (EELT…AQLL), 3003–3092 (RRVH…LRVT), 3095–3183 (PSVF…VHAR), 3184–3268 (PVRF…ATLT), 3273–3356 (PAQF…ASLT), 3359–3444 (PMPA…ATLT), 3449–3532 (PAKF…ATLT), 3537–3620 (PARF…AMLT), 3625–3708 (PIKF…AMLT), 3713–3796 (PSKF…ATLT), 3801–3884 (PARF…ATLT), 3890–3973 (PVFR…ATLT), 3978–4062 (PVRF…ASLS), 4068–4160 (PKFK…PEVT), 4171–4239 (TADE…NHAS), 4248–4337 (PEVT…LKVT), 4340–4427 (NTVV…FLTV), and 4430–4518 (WRLE…ARLT). 3 disulfide bridges follow: C2187/C2237, C2311/C2361, and C2490/C2540. C2668 and C2718 are oxidised to a cystine. 2 cysteine pairs are disulfide-bonded: C2848–C2898 and C2937–C2987. At S2889 the chain carries Phosphoserine. 12 cysteine pairs are disulfide-bonded: C3117-C3167, C3206-C3256, C3295-C3344, C3383-C3432, C3471-C3520, C3559-C3608, C3647-C3696, C3735-C3784, C3823-C3872, C3911-C3961, C4000-C4050, and C4089-C4141. S4015 bears the Phosphoserine mark. A disulfide bridge links C4453 with C4508. One can recognise a Fibronectin type-III 3 domain in the interval 4525 to 4619 (PPEDAEVVAR…LPQTVRLAEP (95 aa)). The Ig-like 47 domain occupies 4624–4714 (PPQPSAPESR…AAATFQVALS (91 aa)). The segment at 4749–4785 (MSREPTLDSISELPEEDGRSQRLPQEAEEVAPDLSEG) is disordered. Phosphoserine is present on S4750. The residue at position 4754 (T4754) is a Phosphothreonine. At S4757 the chain carries Phosphoserine. The residue at position 4788 (T4788) is a Phosphothreonine. Residue S4805 is modified to Phosphoserine. The tract at residues 4820–4860 (LKKAGRPGTSPLASKVGAPAAPSVKPQQQQEPLAAVRPPLG) is disordered. The IQ domain occupies 4872 to 4901 (MDKAAVKIQAAFKGYKVRKEMKQQEGPMFS). 2 Ig-like domains span residues 4898–4989 (PMFS…VVVS) and 5126–5215 (PVFL…AELR). Cystine bridges form between C4919-C4971 and C5147-C5199. Residues 5238–5256 (AQGYLSSREQEGTESTTDE) show a composition bias toward polar residues. Residues 5238–5257 (AQGYLSSREQEGTESTTDEG) form a disordered region. Ig-like domains lie at 5260–5349 (PQVV…ARLL) and 5371–5467 (PRML…LHVS). The segment at 5554–5596 (AKLQVPGGDSDEDSKTPSASPRHGRSRPSSSIQESSSESEDGD) is disordered. A Phosphoserine modification is found at S5563. At T5569 the chain carries Phosphothreonine. A compositionally biased stretch (low complexity) spans 5570 to 5589 (PSASPRHGRSRPSSSIQESS). Phosphoserine occurs at positions 5571 and 5573. An SH3 domain is found at 5600-5667 (EIFDIYVVTA…SPAYLDRRLK (68 aa)). A DH domain is found at 5693-5877 (RLSSVIQELL…SALPQRAENK (185 aa)). The PH domain occupies 5895–6004 (EPIRQGHFIV…WVKEICGIQQ (110 aa)). R5975 provides a ligand contact to a 1,2-diacyl-sn-glycero-3-phospho-(1D-myo-inositol-4,5-bisphosphate). R5980 is a binding site for a 1,2-diacyl-sn-glycero-3-phospho-(1D-myo-inositol-3,4-bisphosphate). Ig-like domains lie at 6014 to 6097 (PDFE…GNCS) and 6108 to 6200 (PRFV…LRIQ). Intrachain disulfides connect C6035-C6087 and C6129-C6182. The interval 6237–6296 (RLLGPKAPGPSTGDLTGPGPCPRGAPALQETGSQPPVTGTSEAPAVPPRVPQPLLHEGPE) is disordered. A compositionally biased stretch (polar residues) spans 6266 to 6277 (ETGSQPPVTGTS). The Ig-like 54 domain maps to 6357-6445 (PSMQVTIEDV…GQVLCKAELL (89 aa)). Positions 6468–6721 (YEVKEEIGRG…AAQCLSHPWF (254 aa)) constitute a Protein kinase 1 domain. ATP is bound by residues 6474 to 6482 (IGRGVFGFV) and K6497. The active-site Proton acceptor is the D6587. 3 disordered regions span residues 6777–6863 (GVAR…AQGC), 6952–7176 (SGTH…TMRK), and 7217–7272 (VSQS…TPWE). S6831 carries the post-translational modification Phosphoserine. The segment covering 7052-7061 (AVAPCPPGSF) has biased composition (pro residues). The span at 7115–7139 (SSPGSASQASSSQVSSLRVGSSQVG) shows a compositional bias: low complexity. Residues 7160–7172 (DSTPTLQRPQEQA) are compositionally biased toward polar residues. The segment covering 7227 to 7242 (EARAESQSEEQQEARA) has biased composition (basic and acidic residues). A Phosphoserine modification is found at S7244. The 90-residue stretch at 7463 to 7552 (PTFLRELSDE…GTVTTTGVLR (90 aa)) folds into the Ig-like 55 domain. A disulfide bridge connects residues C7484 and C7536. In terms of domain architecture, Fibronectin type-III 4 spans 7557 to 7649 (PSSSPCPDIG…PSEQVLLGGP (93 aa)). The 253-residue stretch at 7672–7924 (FAFQTQIQRG…ASSCLQCPWL (253 aa)) folds into the Protein kinase 2 domain. Residues 7678 to 7686 (IQRGRFSVV) and K7701 contribute to the ATP site. Residue D7791 is the Proton acceptor of the active site.

The protein belongs to the protein kinase superfamily. CAMK Ser/Thr protein kinase family. As to quaternary structure, interacts (via protein kinase domain 2) with CDH2 and (via protein kinase domain 1) with ATP1B1. Isoform 3 interacts with TTN/titin and calmodulin. Isoform 3 interacts with ANK1 isoform Mu17/ank1.5. The cofactor is Mg(2+). Autophosphorylated by protein kinase domains 1 and 2.

The protein resides in the cytoplasm. It is found in the myofibril. The protein localises to the sarcomere. It localises to the m line. Its subcellular location is the z line. The protein resides in the cell membrane. It is found in the sarcolemma. The protein localises to the nucleus. The enzyme catalyses L-seryl-[protein] + ATP = O-phospho-L-seryl-[protein] + ADP + H(+). The catalysed reaction is L-threonyl-[protein] + ATP = O-phospho-L-threonyl-[protein] + ADP + H(+). Structural component of striated muscles which plays a role in myofibrillogenesis. Probably involved in the assembly of myosin into sarcomeric A bands in striated muscle. Has serine/threonine protein kinase activity and phosphorylates N-cadherin CDH2 and sodium/potassium-transporting ATPase subunit ATP1B1. Binds (via the PH domain) strongly to phosphatidylinositol 3,4-bisphosphate (PtdIns(3,4)P2) and phosphatidylinositol 4,5-bisphosphate (PtdIns(4,5)P2), and to a lesser extent to phosphatidylinositol 3-phosphate (PtdIns(3)P), phosphatidylinositol 4-phosphate (PtdIns(4)P), phosphatidylinositol 5-phosphate (PtdIns(5)P) and phosphatidylinositol 3,4,5-trisphosphate (PtdIns(3,4,5)P3). This Homo sapiens (Human) protein is Obscurin (OBSCN).